We begin with the raw amino-acid sequence, 66 residues long: Conotoxin Cl14.1b (66 aa).

Residues 1–19 form the signal peptide; sequence MNVTVMFLVLLLTMPLTDG. Residues 20–47 constitute a propeptide that is removed on maturation; the sequence is FNIRAINGGELFGLVQRDAGNALDHGFY.

It belongs to the conotoxin L superfamily. In terms of processing, contains 2 disulfide bonds. As to expression, expressed by the venom duct.

Its subcellular location is the secreted. The protein is Conotoxin Cl14.1b of Californiconus californicus (California cone).